Consider the following 65-residue polypeptide: Ringhalexin (65 aa).

4 disulfides stabilise this stretch: C3-C24, C17-C42, C46-C57, and C58-C63.

Expressed by the venom gland.

The protein localises to the secreted. Its function is as follows. Has anticoagulant activity, since it is able to inhibit the activation of coagulation factor X (F10) by coagulation factor VIIa (F7) (IC(50)=123.8 nM). Also shows weak irreversible neurotoxicity. The chain is Ringhalexin from Hemachatus haemachatus (Rinkhals).